The sequence spans 202 residues: Peptide deformylase 2 (202 aa).

Fe cation-binding residues include Cys123 and His165. The active site involves Glu166. Residue His169 coordinates Fe cation.

The protein belongs to the polypeptide deformylase family. Requires Fe(2+) as cofactor.

It catalyses the reaction N-terminal N-formyl-L-methionyl-[peptide] + H2O = N-terminal L-methionyl-[peptide] + formate. Removes the formyl group from the N-terminal Met of newly synthesized proteins. Requires at least a dipeptide for an efficient rate of reaction. N-terminal L-methionine is a prerequisite for activity but the enzyme has broad specificity at other positions. The protein is Peptide deformylase 2 of Vibrio vulnificus (strain YJ016).